Reading from the N-terminus, the 373-residue chain is Chaperone protein DnaJ (373 aa).

In terms of domain architecture, J spans 4-68 (NYYQILGVSK…QKRAAYDRLG (65 aa)). The CR-type zinc-finger motif lies at 136 to 214 (GIEKNINFSS…CHGMGRYHKQ (79 aa)). Residues C149, C152, C166, C169, C188, C191, C202, and C205 each coordinate Zn(2+). 4 CXXCXGXG motif repeats span residues 149-156 (CDTCHGSG), 166-173 (CDACSGVG), 188-195 (CHKCQGNG), and 202-209 (CKKCHGMG).

The protein belongs to the DnaJ family. As to quaternary structure, homodimer. Zn(2+) is required as a cofactor.

It localises to the cytoplasm. Its function is as follows. Participates actively in the response to hyperosmotic and heat shock by preventing the aggregation of stress-denatured proteins and by disaggregating proteins, also in an autonomous, DnaK-independent fashion. Unfolded proteins bind initially to DnaJ; upon interaction with the DnaJ-bound protein, DnaK hydrolyzes its bound ATP, resulting in the formation of a stable complex. GrpE releases ADP from DnaK; ATP binding to DnaK triggers the release of the substrate protein, thus completing the reaction cycle. Several rounds of ATP-dependent interactions between DnaJ, DnaK and GrpE are required for fully efficient folding. Also involved, together with DnaK and GrpE, in the DNA replication of plasmids through activation of initiation proteins. The chain is Chaperone protein DnaJ from Rickettsia rickettsii (strain Iowa).